The chain runs to 131 residues: Small ribosomal subunit protein uS8 (131 aa).

Belongs to the universal ribosomal protein uS8 family. Part of the 30S ribosomal subunit. Contacts proteins S5 and S12.

One of the primary rRNA binding proteins, it binds directly to 16S rRNA central domain where it helps coordinate assembly of the platform of the 30S subunit. This Cupriavidus metallidurans (strain ATCC 43123 / DSM 2839 / NBRC 102507 / CH34) (Ralstonia metallidurans) protein is Small ribosomal subunit protein uS8.